The following is a 195-amino-acid chain: Inner membrane protein YohC (195 aa).

At Met1 to His32 the chain is on the cytoplasmic side. A helical membrane pass occupies residues Val33–Phe55. Residues Gly56 to Ser64 are Periplasmic-facing. A helical membrane pass occupies residues Trp65 to Gly87. The Cytoplasmic segment spans residues Arg88–Met107. Residues Val108–Trp130 form a helical membrane-spanning segment. Over Leu131–Leu134 the chain is Periplasmic. Residues Val135–Ile157 form a helical membrane-spanning segment. Over Asn158 to Thr169 the chain is Cytoplasmic. Residues Leu170–Tyr192 traverse the membrane as a helical segment. Topologically, residues Arg193–Phe195 are periplasmic.

Its subcellular location is the cell inner membrane. The chain is Inner membrane protein YohC (yohC) from Escherichia coli O6:H1 (strain CFT073 / ATCC 700928 / UPEC).